A 485-amino-acid chain; its full sequence is Lysine--tRNA ligase (485 aa).

Glutamate 391 and glutamate 398 together coordinate Mg(2+).

The protein belongs to the class-II aminoacyl-tRNA synthetase family. In terms of assembly, homodimer. The cofactor is Mg(2+).

Its subcellular location is the cytoplasm. The enzyme catalyses tRNA(Lys) + L-lysine + ATP = L-lysyl-tRNA(Lys) + AMP + diphosphate. This chain is Lysine--tRNA ligase, found in Blochmanniella floridana.